The chain runs to 365 residues: Ribosome biogenesis regulatory protein homolog (365 aa).

Met-1 is subject to N-acetylmethionine. Ser-5 is modified (phosphoserine). Residues Lys-154 and Lys-226 each participate in a glycyl lysine isopeptide (Lys-Gly) (interchain with G-Cter in SUMO2) cross-link. Positions 200–255 (QMPSSAGLHPTGHQSKEELGRAMQVAKVSTASVGRFQERLPKEKAPRGSGKKRKFQ) are disordered. Basic and acidic residues predominate over residues 235 to 245 (FQERLPKEKAP). Lys-266 participates in a covalent cross-link: Glycyl lysine isopeptide (Lys-Gly) (interchain with G-Cter in SUMO2). The disordered stretch occupies residues 272–365 (LRVMNSKKPQ…VPHHGGKRRK (94 aa)). At Arg-273 the chain carries Citrulline. Basic residues-rich tracts occupy residues 302-325 (KRRK…RRKG) and 340-365 (GKKH…KRRK).

The protein belongs to the RRS1 family. As to quaternary structure, component of a hexameric 5S RNP precursor complex, composed of 5S RNA, RRS1, RPF2/BXDC1, RPL5, RPL11 and HEATR3; this complex acts as a precursor for ribosome assembly. Post-translationally, citrullinated by PADI4.

The protein localises to the nucleus. The protein resides in the nucleolus. Involved in ribosomal large subunit assembly. May regulate the localization of the 5S RNP/5S ribonucleoprotein particle to the nucleolus. The chain is Ribosome biogenesis regulatory protein homolog (Rrs1) from Rattus norvegicus (Rat).